We begin with the raw amino-acid sequence, 232 residues long: tRNA (guanine-N(1)-)-methyltransferase (232 aa).

S-adenosyl-L-methionine is bound by residues Gly-108 and 128–133; that span reads IGDFIM.

The protein belongs to the RNA methyltransferase TrmD family. In terms of assembly, homodimer.

The protein localises to the cytoplasm. The catalysed reaction is guanosine(37) in tRNA + S-adenosyl-L-methionine = N(1)-methylguanosine(37) in tRNA + S-adenosyl-L-homocysteine + H(+). Specifically methylates guanosine-37 in various tRNAs. The sequence is that of tRNA (guanine-N(1)-)-methyltransferase from Campylobacter fetus subsp. fetus (strain 82-40).